Reading from the N-terminus, the 491-residue chain is Glutamate--tRNA ligase (491 aa).

Positions 9-19 (PSPTGTPHVGM) match the 'HIGH' region motif. The short motif at 253-257 (KLSKR) is the 'KMSKS' region element. Lys-256 is a binding site for ATP.

The protein belongs to the class-I aminoacyl-tRNA synthetase family. Glutamate--tRNA ligase type 1 subfamily. Monomer.

The protein resides in the cytoplasm. It carries out the reaction tRNA(Glu) + L-glutamate + ATP = L-glutamyl-tRNA(Glu) + AMP + diphosphate. Functionally, catalyzes the attachment of glutamate to tRNA(Glu) in a two-step reaction: glutamate is first activated by ATP to form Glu-AMP and then transferred to the acceptor end of tRNA(Glu). The polypeptide is Glutamate--tRNA ligase (Leifsonia xyli subsp. xyli (strain CTCB07)).